The following is a 317-amino-acid chain: DNA repair nuclease/redox regulator APEX1 (317 aa).

Residues 1-58 (MPKRGKKAAADDGEEPKSEPETKKSKGAAKKTEKEAAGEGPVLYEDPPDQKTSPSGKS) form a disordered region. The tract at residues 2–32 (PKRGKKAAADDGEEPKSEPETKKSKGAAKKT) is necessary for interaction with YBX1, binding to RNA, association together with NPM1 to rRNA, endoribonuclease activity on abasic RNA and localization in the nucleoli. Residues K6 and K7 each carry the N6-acetyllysine; by EP300 modification. A Nuclear localization signal (NLS) motif is present at residues 8 to 12 (AAADD). The span at 15–37 (EPKSEPETKKSKGAAKKTEKEAA) shows a compositional bias: basic and acidic residues. Residue S18 is modified to Phosphoserine. A necessary for interaction with NPM1 and for efficient rRNA binding region spans residues 22–32 (TKKSKGAAKKT). An N6-acetyllysine mark is found at K26, K30, K31, and K34. Phosphoserine is present on S53. Residues 63-79 (ICSWNVDGLRAWIKKKG) carry the Nuclear export signal (NES) motif. S-nitrosocysteine; alternate is present on C64. The cysteines at positions 64 and 92 are disulfide-linked. D69 is a binding site for Mg(2+). S-nitrosocysteine; alternate is present on C92. E95 is a binding site for Mg(2+). The active site involves Y170. K196 is modified (N6-acetyllysine). D209 and N211 together coordinate Mg(2+). Residue D209 is the Proton donor/acceptor of the active site. A Phosphothreonine; by CDK5 modification is found at T232. Residues 288-317 (HSLLPALCDSKIRSKALGSDHCPITLYLAL) are mitochondrial targeting sequence (MTS). A Mg(2+)-binding site is contributed by D307. C309 bears the S-nitrosocysteine mark.

This sequence belongs to the DNA repair enzymes AP/ExoA family. As to quaternary structure, monomer. Homodimer; disulfide-linked. Component of the SET complex, composed of at least APEX1, SET, ANP32A, HMGB2, NME1 and TREX1. Associates with the dimer XRCC5/XRCC6 in a DNA-dependent manner. Interacts with SIRT1; the interaction is increased in the context of genotoxic stress. Interacts with HDAC1, HDAC2 and HDAC3; the interactions are not dependent on the APEX1 acetylation status. Interacts with XRCC1; the interaction is induced by SIRT1 and increased with the APEX1 acetylated form. Interacts with NPM1 (via N-terminal domain); the interaction is RNA-dependent and decreases in hydrogen peroxide-damaged cells. Interacts (via N-terminus) with YBX1 (via C-terminus); the interaction is increased in presence of APEX1 acetylated at Lys-6 and Lys-7. Interacts with HNRNPL; the interaction is DNA-dependent. Interacts (via N-terminus) with KPNA1 and KPNA2. Interacts with TXN; the interaction stimulates the FOS/JUN AP-1 complex DNA-binding activity in a redox-dependent manner. Interacts with GZMA, KRT8, MDM2, POLB, PRDX6, PRPF19, RPLP0, TOMM20 and WDR77. Binds to CDK5. The cofactor is Mg(2+). It depends on Mn(2+) as a cofactor. Post-translationally, phosphorylated. Phosphorylation by kinase PKC or casein kinase CK2 results in enhanced redox activity that stimulates binding of the FOS/JUN AP-1 complex to its cognate binding site. AP-endodeoxyribonuclease activity is not affected by CK2-mediated phosphorylation. Phosphorylation of Thr-232 by CDK5 in response to MPP(+)/MPTP (1-methyl-4-phenylpyridinium) reduces AP-endodeoxyribonuclease activity resulting in accumulation of DNA damage and contributing to neuronal death. In terms of processing, acetylated on Lys-6 and Lys-7. Acetylation is increased by the transcriptional coactivator EP300 acetyltransferase, genotoxic agents like H(2)O(2) and methyl methanesulfonate (MMS). Acetylation increases its binding affinity to the negative calcium response element (nCaRE) DNA promoter. The acetylated form induces a stronger binding of YBX1 to the Y-box sequence in the MDR1 promoter than the unacetylated form. Deacetylated on lysines. Lys-6 and Lys-7 are deacetylated by SIRT1. Cleaved at Lys-30 by granzyme A to create the mitochondrial form; leading in reduction of binding to DNA, AP endodeoxyribonuclease activity, redox activation of transcription factors and to enhanced cell death. Cleaved by granzyme K; leading to intracellular ROS accumulation and enhanced cell death after oxidative stress. Post-translationally, cys-64 and Cys-92 are nitrosylated in response to nitric oxide (NO) and lead to the exposure of the nuclear export signal (NES). In terms of processing, ubiquitinated by MDM2; leading to translocation to the cytoplasm and proteasomal degradation. In terms of tissue distribution, expressed in both resting and stimulated B cells stimulated to switch (at protein level).

The protein resides in the nucleus. It is found in the nucleolus. The protein localises to the nucleus speckle. Its subcellular location is the endoplasmic reticulum. It localises to the cytoplasm. The protein resides in the mitochondrion. It carries out the reaction a deoxyribonucleotide-2'-deoxyribose-5'-monophosphate-DNA + H2O = a 5'-end 2'-deoxyribose-5'-monophosphate-DNA + a 3'-end 2'-deoxyribonucleotide-DNA + H(+). The catalysed reaction is Exonucleolytic cleavage in the 3'- to 5'-direction to yield nucleoside 5'-phosphates.. It catalyses the reaction a 3'-end 2'-deoxyribonucleotide-3'-phosphoglycolate-DNA + H2O = 2-phosphoglycolate + a 3'-end 2'-deoxyribonucleotide-DNA + H(+). The enzyme catalyses a 3'-end 2'-deoxyribonucleotide-8-oxoguanine-DNA + H2O = 8-oxo-dGMP + a 3'-end 2'-deoxyribonucleotide-DNA + H(+). With respect to regulation, NPM1 stimulates endodeoxyribonuclease activity on double-stranded DNA with AP sites, but inhibits endoribonuclease activity on single-stranded RNA containing AP sites. Its function is as follows. Multifunctional protein that plays a central role in the cellular response to oxidative stress. The two major activities of APEX1 are DNA repair and redox regulation of transcriptional factors. Functions as an apurinic/apyrimidinic (AP) endodeoxyribonuclease in the base excision repair (BER) pathway of DNA lesions induced by oxidative and alkylating agents. Initiates repair of AP sites in DNA by catalyzing hydrolytic incision of the phosphodiester backbone immediately adjacent to the damage, generating a single-strand break with 5'-deoxyribose phosphate and 3'-hydroxyl ends. Also incises at AP sites in the DNA strand of DNA/RNA hybrids, single-stranded DNA regions of R-loop structures, and single-stranded RNA molecules. Operates at switch sites of immunoglobulin (Ig) constant regions where it mediates Ig isotype class switch recombination. Processes AP sites induced by successive action of AICDA and UNG. Generates staggered nicks in opposite DNA strands resulting in the formation of double-strand DNA breaks that are finally resolved via non-homologous end joining repair pathway. Has 3'-5' exodeoxyribonuclease activity on mismatched deoxyribonucleotides at the 3' termini of nicked or gapped DNA molecules during short-patch BER. Possesses DNA 3' phosphodiesterase activity capable of removing lesions (such as phosphoglycolate and 8-oxoguanine) blocking the 3' side of DNA strand breaks. Also acts as an endoribonuclease involved in the control of single-stranded RNA metabolism. Plays a role in regulating MYC mRNA turnover by preferentially cleaving in between UA and CA dinucleotides of the MYC coding region determinant (CRD). In association with NMD1, plays a role in the rRNA quality control process during cell cycle progression. Acts as a loading factor for POLB onto non-incised AP sites in DNA and stimulates the 5'-terminal deoxyribose 5'-phosphate (dRp) excision activity of POLB. Exerts reversible nuclear redox activity to regulate DNA binding affinity and transcriptional activity of transcriptional factors by controlling the redox status of their DNA-binding domain, such as the FOS/JUN AP-1 complex after exposure to IR. Involved in calcium-dependent down-regulation of parathyroid hormone (PTH) expression by binding to negative calcium response elements (nCaREs). Together with HNRNPL or the dimer XRCC5/XRCC6, associates with nCaRE, acting as an activator of transcriptional repression. May also play a role in the epigenetic regulation of gene expression by participating in DNA demethylation. Stimulates the YBX1-mediated MDR1 promoter activity, when acetylated at Lys-6 and Lys-7, leading to drug resistance. Plays a role in protection from granzyme-mediated cellular repair leading to cell death. Binds DNA and RNA. Associates, together with YBX1, on the MDR1 promoter. Together with NPM1, associates with rRNA. This Mus musculus (Mouse) protein is DNA repair nuclease/redox regulator APEX1 (Apex1).